We begin with the raw amino-acid sequence, 635 residues long: Phosphomethylpyrimidine synthase (635 aa).

The span at 1–14 shows a compositional bias: polar residues; the sequence is MNATVSSAVQSSLP. Residues 1–41 form a disordered region; sequence MNATVSSAVQSSLPFSGKTAQVDEGTVKPLPRSQKTYLSGS. Residues Asn240, Met269, Tyr298, His334, 354 to 356, 395 to 398, and Glu434 each bind substrate; these read SRG and DGLR. A Zn(2+)-binding site is contributed by His438. Substrate is bound at residue Tyr461. His502 serves as a coordination point for Zn(2+). Positions 582, 585, and 590 each coordinate [4Fe-4S] cluster.

The protein belongs to the ThiC family. Homodimer. [4Fe-4S] cluster is required as a cofactor.

The catalysed reaction is 5-amino-1-(5-phospho-beta-D-ribosyl)imidazole + S-adenosyl-L-methionine = 4-amino-2-methyl-5-(phosphooxymethyl)pyrimidine + CO + 5'-deoxyadenosine + formate + L-methionine + 3 H(+). It participates in cofactor biosynthesis; thiamine diphosphate biosynthesis. Catalyzes the synthesis of the hydroxymethylpyrimidine phosphate (HMP-P) moiety of thiamine from aminoimidazole ribotide (AIR) in a radical S-adenosyl-L-methionine (SAM)-dependent reaction. This Nitrosospira multiformis (strain ATCC 25196 / NCIMB 11849 / C 71) protein is Phosphomethylpyrimidine synthase.